A 271-amino-acid polypeptide reads, in one-letter code: Regulatory protein RecX (271 aa).

It belongs to the RecX family.

Its subcellular location is the cytoplasm. In terms of biological role, modulates RecA activity. This is Regulatory protein RecX from Geobacillus sp. (strain WCH70).